The primary structure comprises 573 residues: ATP-dependent RNA helicase RhlB (573 aa).

The Q motif signature appears at 9–37; it reads LTFSSFDLHPALVAGLESAGFTRCTPIQA. Residues 40–220 enclose the Helicase ATP-binding domain; that stretch reads LPVALPGGDV…YEHMNEPEKL (181 aa). Residue 53-60 participates in ATP binding; that stretch reads AQTGTGKT. Residues 166-169 carry the DEAD box motif; that stretch reads DEAD. The region spanning 231–393 is the Helicase C-terminal domain; the sequence is RVRQRIYFPS…PVTTELLTPL (163 aa). The segment covering 391–400 has biased composition (low complexity); the sequence is TPLPRTPRAT. The disordered stretch occupies residues 391 to 559; sequence TPLPRTPRAT…AKPSGSPSLL (169 aa). The segment covering 402–411 has biased composition (acidic residues); that stretch reads EGEEVDDDAG. Basic and acidic residues predominate over residues 419–432; that stretch reads REAREQRAADEARR. Residues 435–449 show a composition bias toward gly residues; that stretch reads GRSGPGGASRSGSGG. Positions 450-461 are enriched in basic and acidic residues; sequence GRRDGAGADGKP. The span at 476–499 shows a compositional bias: low complexity; sequence PAAAPSETPVVVAAAAETPAVTAA. Positions 505–514 are enriched in basic residues; the sequence is PRKRRRRRNG. 2 stretches are compositionally biased toward low complexity: residues 516–528 and 541–559; these read PVEGAEPVVASTP and VVAKPVRAAAKPSGSPSLL.

This sequence belongs to the DEAD box helicase family. RhlB subfamily. As to quaternary structure, component of the RNA degradosome, which is a multiprotein complex involved in RNA processing and mRNA degradation.

Its subcellular location is the cytoplasm. The enzyme catalyses ATP + H2O = ADP + phosphate + H(+). In terms of biological role, DEAD-box RNA helicase involved in RNA degradation. Has RNA-dependent ATPase activity and unwinds double-stranded RNA. This Xanthomonas campestris pv. campestris (strain B100) protein is ATP-dependent RNA helicase RhlB.